The chain runs to 288 residues: Pyruvate synthase subunit PorB (288 aa).

[4Fe-4S] cluster contacts are provided by Cys16, Cys19, and Cys44. Positions 137-148 (STPYGASTTTSP) are enriched in polar residues. Residues 137 to 159 (STPYGASTTTSPHGKESFGEDRP) form a disordered region. The segment covering 149-159 (HGKESFGEDRP) has biased composition (basic and acidic residues). Position 208 (Cys208) interacts with [4Fe-4S] cluster.

In terms of assembly, heterotetramer of one alpha, one beta, one delta and one gamma chain. Requires [4Fe-4S] cluster as cofactor.

It carries out the reaction 2 oxidized [2Fe-2S]-[ferredoxin] + pyruvate + CoA = 2 reduced [2Fe-2S]-[ferredoxin] + acetyl-CoA + CO2 + H(+). The sequence is that of Pyruvate synthase subunit PorB (porB) from Methanothermobacter thermautotrophicus (strain ATCC 29096 / DSM 1053 / JCM 10044 / NBRC 100330 / Delta H) (Methanobacterium thermoautotrophicum).